A 143-amino-acid polypeptide reads, in one-letter code: FAD synthase (143 aa).

Residues 9–10 (TF), 14–17 (HPGH), and Asp92 contribute to the ATP site.

This sequence belongs to the archaeal FAD synthase family. Homodimer. Requires a divalent metal cation as cofactor.

It catalyses the reaction FMN + ATP + H(+) = FAD + diphosphate. Its pathway is cofactor biosynthesis; FAD biosynthesis; FAD from FMN: step 1/1. Catalyzes the transfer of the AMP portion of ATP to flavin mononucleotide (FMN) to produce flavin adenine dinucleotide (FAD) coenzyme. The sequence is that of FAD synthase from Methanococcoides burtonii (strain DSM 6242 / NBRC 107633 / OCM 468 / ACE-M).